We begin with the raw amino-acid sequence, 400 residues long: Serine/threonine transporter SstT (400 aa).

The next 10 membrane-spanning stretches (helical) occupy residues 11–31, 45–65, 81–101, 138–158, 175–195, 213–233, 242–264, 295–315, 327–347, and 354–374; these read IGLV…GWLA, FVGA…MAAI, IMYM…SFLF, AIAE…GFAL, AISQ…LGLV, ILMV…PLII, YPLV…SSAA, MAGA…TLGI, LVAT…LLLI, and FSIP…IGVI.

It belongs to the dicarboxylate/amino acid:cation symporter (DAACS) (TC 2.A.23) family.

The protein resides in the cell inner membrane. The enzyme catalyses L-serine(in) + Na(+)(in) = L-serine(out) + Na(+)(out). The catalysed reaction is L-threonine(in) + Na(+)(in) = L-threonine(out) + Na(+)(out). In terms of biological role, involved in the import of serine and threonine into the cell, with the concomitant import of sodium (symport system). This Psychrobacter cryohalolentis (strain ATCC BAA-1226 / DSM 17306 / VKM B-2378 / K5) protein is Serine/threonine transporter SstT.